The sequence spans 690 residues: Dual specificity protein kinase lkh1 (690 aa).

The disordered stretch occupies residues 39–70; the sequence is PNLPPPFSVHQLQSFVPPQPPSSSSPSTTGTV. A Protein kinase domain is found at 362–682; that stretch reads YTVVRLLGHG…AKEALWHPFF (321 aa). ATP is bound by residues 368–376 and Lys-391; that span reads LGHGTFGKV. Catalysis depends on Asp-488, which acts as the Proton acceptor.

The protein belongs to the protein kinase superfamily. CMGC Ser/Thr protein kinase family. Lammer subfamily. Post-translationally, autophosphorylates on all three types of residues.

It catalyses the reaction L-seryl-[protein] + ATP = O-phospho-L-seryl-[protein] + ADP + H(+). The catalysed reaction is L-threonyl-[protein] + ATP = O-phospho-L-threonyl-[protein] + ADP + H(+). It carries out the reaction L-tyrosyl-[protein] + ATP = O-phospho-L-tyrosyl-[protein] + ADP + H(+). Its function is as follows. Protein kinase that may act as a negative regulator of filamentous growth and flocculation. Appears to have a role in normal cell wall and septum formation and in cell separation. May have antagonistic function in the regulation of beta-glucan distribution between the sites for cell wall and septum assembly. The chain is Dual specificity protein kinase lkh1 (lkh1) from Schizosaccharomyces pombe (strain 972 / ATCC 24843) (Fission yeast).